The chain runs to 108 residues: UPF0102 protein Sden_0272 (108 aa).

This sequence belongs to the UPF0102 family.

In Shewanella denitrificans (strain OS217 / ATCC BAA-1090 / DSM 15013), this protein is UPF0102 protein Sden_0272.